Consider the following 387-residue polypeptide: Glutamate N-acetyltransferase (387 aa).

The substrate site is built by Thr-140, Lys-162, Thr-173, Glu-257, Asn-382, and Thr-387. Thr-173 acts as the Nucleophile in catalysis.

Belongs to the ArgJ family. In terms of assembly, heterotetramer of two alpha and two beta chains.

It is found in the cytoplasm. It catalyses the reaction N(2)-acetyl-L-ornithine + L-glutamate = N-acetyl-L-glutamate + L-ornithine. It functions in the pathway amino-acid biosynthesis; L-arginine biosynthesis; L-ornithine and N-acetyl-L-glutamate from L-glutamate and N(2)-acetyl-L-ornithine (cyclic): step 1/1. Its function is as follows. Catalyzes the transfer of the acetyl group from N(2)-acetylornithine to glutamate, forming N-acetylglutamate and L-ornithine. In Methanopyrus kandleri (strain AV19 / DSM 6324 / JCM 9639 / NBRC 100938), this protein is Glutamate N-acetyltransferase.